A 272-amino-acid chain; its full sequence is Carbonic anhydrase (272 aa).

Zn(2+) is bound by residues Cys-39, His-98, and Cys-101.

It belongs to the beta-class carbonic anhydrase family. In terms of assembly, a hexamer formed by a trimer of dimers. Purified from carboxysomes with the both RuBisCO subunits and the full-length form of CcmM, probably interacts with the N-terminus of CcmM. Zn(2+) is required as a cofactor.

Its subcellular location is the carboxysome. The enzyme catalyses hydrogencarbonate + H(+) = CO2 + H2O. Its function is as follows. Reversible hydration of carbon dioxide. Essential to photosynthetic carbon dioxide fixation, supplies CO(2) to RuBisCO (ribulose bisphosphate carboxylase, rbcL-rbcS) in the carboxysome. Loss of activity results in limitation of CO(2) availability to RuBisCO located in the cytoplasm. In Synechococcus elongatus (strain ATCC 33912 / PCC 7942 / FACHB-805) (Anacystis nidulans R2), this protein is Carbonic anhydrase.